The following is a 316-amino-acid chain: Ribosomal RNA small subunit methyltransferase H (316 aa).

S-adenosyl-L-methionine contacts are provided by residues 35-37 (SGH), Asp55, Phe84, Asp105, and Gln112.

Belongs to the methyltransferase superfamily. RsmH family.

The protein resides in the cytoplasm. It carries out the reaction cytidine(1402) in 16S rRNA + S-adenosyl-L-methionine = N(4)-methylcytidine(1402) in 16S rRNA + S-adenosyl-L-homocysteine + H(+). Functionally, specifically methylates the N4 position of cytidine in position 1402 (C1402) of 16S rRNA. This Streptococcus equi subsp. zooepidemicus (strain H70) protein is Ribosomal RNA small subunit methyltransferase H.